The chain runs to 221 residues: Sugar transporter SWEET1 (221 aa).

7 helical membrane passes run 3-23, 42-62, 68-88, 96-116, 129-149, 160-180, and 186-206; these read AGGFLDSLIYGACVVFTLGMF, VQFLPFLTTEVNNLGWLSYGA, ILIVVNTVGAALQTLYILAYL, VVLLQTATLLGVLLLGYGYFW, LGLFCSVFTISMYLSPLADLA, LSYPLTIATLLTSASWCLYGF, and YIMVSNFPGIVTSFIRFWLFW. Residues 10 to 94 form the MtN3/slv 1 domain; that stretch reads LIYGACVVFT…LAYLHYCPRK (85 aa). In terms of domain architecture, MtN3/slv 2 spans 127-212; the sequence is QQLGLFCSVF…WLFWKYPQEQ (86 aa). The interval 149–221 is mediates interaction with TRPV2; that stretch reads AKVIQTKSTQ…QDRNYWLLQT (73 aa).

Belongs to the SWEET sugar transporter family. As to quaternary structure, interacts with TRPV2; the interaction probably occurs intracellularly and depends on TRPV2 N-glycosylation. In terms of tissue distribution, ubiquitously expressed with highest expression in oviduct, epididymis and intestine.

It localises to the golgi apparatus membrane. Its subcellular location is the cell membrane. Mediates sugar transport across membranes. May stimulate V(D)J recombination by the activation of RAG1. The sequence is that of Sugar transporter SWEET1 (SLC50A1) from Homo sapiens (Human).